Reading from the N-terminus, the 369-residue chain is Molybdenum import ATP-binding protein ModC (369 aa).

The region spanning 4-239 is the ABC transporter domain; the sequence is LQLRAVVADR…PRSRFGARIA (236 aa). 31-38 contacts ATP; that stretch reads GPNGAGKS. Positions 293-361 constitute a Mop domain; it reads HGSPRNIVGL…VKAQEVALHP (69 aa).

It belongs to the ABC transporter superfamily. Molybdate importer (TC 3.A.1.8) family. The complex is composed of two ATP-binding proteins (ModC), two transmembrane proteins (ModB) and a solute-binding protein (ModA).

The protein localises to the cell membrane. It catalyses the reaction molybdate(out) + ATP + H2O = molybdate(in) + ADP + phosphate + H(+). Part of the ABC transporter complex ModABC involved in molybdenum import. Responsible for energy coupling to the transport system. The chain is Molybdenum import ATP-binding protein ModC from Mycobacterium tuberculosis (strain CDC 1551 / Oshkosh).